Here is a 440-residue protein sequence, read N- to C-terminus: Transposon Ty1-BL Gag polyprotein (440 aa).

Polar residues-rich tracts occupy residues 20–31, 46–55, and 137–168; these read SVTSKEVQTTQD, VSTQANSQQP, and VGTH…TNQH. Disordered stretches follow at residues 20–84, 137–173, and 350–424; these read SVTS…QNGP, VGTH…RPPP, and QQES…TTEP. The tract at residues 299–401 is RNA-binding; it reads NNGIPINNKV…NSQSRTARAH (103 aa). The segment covering 363 to 372 has biased composition (basic and acidic residues); it reads SPSDEKKDSR. Positions 373-411 are enriched in polar residues; it reads TYTNTTKPKSITRNSQKPNNSQSRTARAHNVSTFNNSPG.

In terms of assembly, homotrimer.

The protein resides in the cytoplasm. In terms of biological role, capsid protein (CA) is the structural component of the virus-like particle (VLP), forming the shell that encapsulates the retrotransposons dimeric RNA genome. The particles are assembled from trimer-clustered units and there are holes in the capsid shells that allow for the diffusion of macromolecules. CA also has nucleocapsid-like chaperone activity, promoting primer tRNA(i)-Met annealing to the multipartite primer-binding site (PBS), dimerization of Ty1 RNA and initiation of reverse transcription. This is Transposon Ty1-BL Gag polyprotein (TY1A-BL) from Saccharomyces cerevisiae (strain ATCC 204508 / S288c) (Baker's yeast).